We begin with the raw amino-acid sequence, 343 residues long: Leucine-rich repeat-containing protein 39 (343 aa).

10 LRR repeats span residues 64–87, 88–110, 111–133, 134–156, 158–180, 181–203, 204–226, 228–249, 250–274, and 275–295; these read EEGR…LVQL, SQIQ…ISSF, QSLI…IGKL, TRLR…LGCC, NLEK…LSNL, KKLS…VVNL, PSLE…IHRM, KLHT…ISRM, KSLD…GMSN, and LRFV…PDLN.

The protein resides in the cytoplasm. Its subcellular location is the myofibril. The protein localises to the sarcomere. It is found in the m line. In terms of biological role, component of the sarcomeric M-band which plays a role in myocyte response to biomechanical stress. May regulate expression of other M-band proteins via an SRF-dependent pathway. Important for normal contractile function in heart. This Danio rerio (Zebrafish) protein is Leucine-rich repeat-containing protein 39.